A 367-amino-acid polypeptide reads, in one-letter code: Porin Omp2a (367 aa).

An N-terminal signal peptide occupies residues 1–22; sequence MNIKSLLLGSAAALVAASGAQA.

This sequence belongs to the alphaproteobacteria porin family. As to quaternary structure, monomer.

It localises to the cell outer membrane. Forms passive diffusion pores that allow small molecular weight hydrophilic materials across the outer membrane. The chain is Porin Omp2a (omp2a) from Brucella melitensis biotype 1 (strain ATCC 23456 / CCUG 17765 / NCTC 10094 / 16M).